The following is a 246-amino-acid chain: 2-C-methyl-D-erythritol 4-phosphate cytidylyltransferase (246 aa).

Belongs to the IspD/TarI cytidylyltransferase family. IspD subfamily.

It carries out the reaction 2-C-methyl-D-erythritol 4-phosphate + CTP + H(+) = 4-CDP-2-C-methyl-D-erythritol + diphosphate. Its pathway is isoprenoid biosynthesis; isopentenyl diphosphate biosynthesis via DXP pathway; isopentenyl diphosphate from 1-deoxy-D-xylulose 5-phosphate: step 2/6. Functionally, catalyzes the formation of 4-diphosphocytidyl-2-C-methyl-D-erythritol from CTP and 2-C-methyl-D-erythritol 4-phosphate (MEP). The protein is 2-C-methyl-D-erythritol 4-phosphate cytidylyltransferase of Clostridium tetani (strain Massachusetts / E88).